Here is a 795-residue protein sequence, read N- to C-terminus: MGENEASLPNTSLQGKKMAYQKVHADQRAPGHSQYLDNDDLQATALDLEWDMEKELEESGFDQFQLDGAENQNLGHSETIDLNLDSIQPATSPKGRFQRLQEESDYITHYTRSAPKSNRCNFCHVLKILCTATILFIFGILIGYYVHTNCPSDAPSSGTVDPQLYQEILKTIQAEDIKKSFRNLVQLYKNEDDMEISKKIKTQWTSLGLEDVQFVNYSVLLDLPGPSPSTVTLSSSGQCFHPNGQPCSEEARKDSSQDLLYSYAAYSAKGTLKAEVIDVSYGMADDLKRIRKIKNVTNQIALLKLGKLPLLYKLSSLEKAGFGGVLLYIDPCDLPKTVNPSHDTFMVSLNPGGDPSTPGYPSVDESFRQSRSNLTSLLVQPISAPLVAKLISSPKARTKNEACSSLELPNNEIRVVSMQVQTVTKLKTVTNVVGFVMGLTSPDRYIIVGSHHHTAHSYNGQEWASSTAIITAFIRALMSKVKRGWRPDRTIVFCSWGGTAFGNIGSYEWGEDFKKVLQKNVVAYISLHSPIRGNSSLYPVASPSLQQLVVEKNNFNCTRRAQCPETNISSIQIQGDADYFINHLGVPIVQFAYEDIKTLEGPSFLSEARFSTRATKIEEMDPSFNLHETITKLSGEVILQIANEPVLPFNALDIALEVQNNLKGDQPNTHQLLAMALRLRESAELFQSDEMRPANDPKERAPIRIRMLNDILQDMEKSFLVKQAPPGFYRNILYHLDEKTSRFSILIEAWEHCKPLASNETLQEALSEVLNSINSAQVYFKAGLDVFKSVLDGKN.

The disordered stretch occupies residues 1–38 (MGENEASLPNTSLQGKKMAYQKVHADQRAPGHSQYLDN). The Cytoplasmic portion of the chain corresponds to 1–121 (MGENEASLPN…RSAPKSNRCN (121 aa)). The residue at position 92 (serine 92) is a Phosphoserine. A helical; Signal-anchor for type II membrane protein membrane pass occupies residues 122–142 (FCHVLKILCTATILFIFGILI). Topologically, residues 143 to 795 (GYYVHTNCPS…VFKSVLDGKN (653 aa)) are extracellular. Asparagine 295, asparagine 373, asparagine 534, and asparagine 759 each carry an N-linked (GlcNAc...) asparagine glycan.

It belongs to the peptidase M28 family. M28B subfamily. In terms of tissue distribution, expressed at higher level in kidney and placenta. In embryo, it is mainly confined to duodenal and stomach endoderm, mesonephros, metanephros and pancreas.

Its subcellular location is the membrane. Functionally, may be catalytically inactive. This Homo sapiens (Human) protein is Inactive N-acetylated-alpha-linked acidic dipeptidase-like protein 2 (NAALADL2).